The following is a 108-amino-acid chain: Nucleoid-associated protein BPP1222 (108 aa).

Positions 86–108 (TSQEKMASVTAGMPLPPGMKLPF) are disordered. A compositionally biased stretch (pro residues) spans 99 to 108 (PLPPGMKLPF).

This sequence belongs to the YbaB/EbfC family. As to quaternary structure, homodimer.

It is found in the cytoplasm. The protein resides in the nucleoid. Its function is as follows. Binds to DNA and alters its conformation. May be involved in regulation of gene expression, nucleoid organization and DNA protection. The chain is Nucleoid-associated protein BPP1222 from Bordetella parapertussis (strain 12822 / ATCC BAA-587 / NCTC 13253).